The primary structure comprises 189 residues: Cyclin-dependent kinase inhibitor 5 (189 aa).

Residues 73 to 93 (KQQKQQLIPSVNQCQTKNPRA) show a composition bias toward polar residues. The segment at 73 to 107 (KQQKQQLIPSVNQCQTKNPRASSGPAKKLEPDTTT) is disordered.

Belongs to the CDI family. ICK/KRP subfamily. As to quaternary structure, interacts with CYCD4-1. Does not interact with CDKA-1. In terms of tissue distribution, expressed in flowers and at lower levels in roots and leaves.

The protein resides in the nucleus. Its subcellular location is the nucleoplasm. Functionally, inhibits CYCD2-1/CDKA-1 complex kinase activity without interaction with the complex. The chain is Cyclin-dependent kinase inhibitor 5 (KRP5) from Arabidopsis thaliana (Mouse-ear cress).